Reading from the N-terminus, the 435-residue chain is Serine--tRNA ligase (435 aa).

An L-serine-binding site is contributed by 241–243 (TAE). 272-274 (RSE) serves as a coordination point for ATP. L-serine is bound at residue glutamate 295. 359 to 362 (EISS) serves as a coordination point for ATP. Serine 395 lines the L-serine pocket.

This sequence belongs to the class-II aminoacyl-tRNA synthetase family. Type-1 seryl-tRNA synthetase subfamily. In terms of assembly, homodimer. The tRNA molecule binds across the dimer.

Its subcellular location is the cytoplasm. The enzyme catalyses tRNA(Ser) + L-serine + ATP = L-seryl-tRNA(Ser) + AMP + diphosphate + H(+). It carries out the reaction tRNA(Sec) + L-serine + ATP = L-seryl-tRNA(Sec) + AMP + diphosphate + H(+). It participates in aminoacyl-tRNA biosynthesis; selenocysteinyl-tRNA(Sec) biosynthesis; L-seryl-tRNA(Sec) from L-serine and tRNA(Sec): step 1/1. Functionally, catalyzes the attachment of serine to tRNA(Ser). Is also able to aminoacylate tRNA(Sec) with serine, to form the misacylated tRNA L-seryl-tRNA(Sec), which will be further converted into selenocysteinyl-tRNA(Sec). The sequence is that of Serine--tRNA ligase from Actinobacillus pleuropneumoniae serotype 7 (strain AP76).